The sequence spans 441 residues: Serine/threonine-protein phosphatase 4 regulatory subunit 2 (441 aa).

Positions 201 to 213 (DEEEGFFDGDEDR) are enriched in acidic residues. Disordered stretches follow at residues 201-220 (DEEE…NKSK), 242-348 (INDD…LTTP), and 364-418 (SPSS…SQED). Positions 249–261 (NKGQNCQSDVTKN) are enriched in polar residues. Positions 264–302 (DDEDDDDNDDDYREDGADEDDEDDDHMGSTDDDEDDDED) are enriched in acidic residues. Threonine 347 bears the Phosphothreonine mark. Positions 388-398 (EDAHENHEGRS) are enriched in basic and acidic residues.

This sequence belongs to the PPP4R2 family. In terms of assembly, regulatory subunit (R2) of the histone H2A phosphatase complex (HTP-C) consisting of PPH3, PSY2 and PSY4. Interacts with SPT4 and SPT5.

Its subcellular location is the nucleus. Its function is as follows. Regulatory subunit of the histone H2A phosphatase complex, which dephosphorylates H2AS128ph (gamma-H2A) that has been displaced from sites of DNA lesions in the double-stranded DNA break repair process. Dephosphorylation is necessary for efficient recovery from the DNA damage checkpoint. The protein is Serine/threonine-protein phosphatase 4 regulatory subunit 2 (PSY4) of Saccharomyces cerevisiae (strain ATCC 204508 / S288c) (Baker's yeast).